We begin with the raw amino-acid sequence, 720 residues long: NAD(+) hydrolase ApTIR (720 aa).

A TIR domain is found at 1–131 (MRYDAFISYS…AVPPALRGVF (131 aa)). NAD(+) contacts are provided by residues 10-11 (SH) and A48. Residue E84 is part of the active site. Residues 192–211 (GALAVVCALLLLVAGTAVAW) traverse the membrane as a helical segment. Disordered stretches follow at residues 231 to 275 (ATAA…AVAE) and 292 to 359 (EGIA…EEAV). Composition is skewed to basic and acidic residues over residues 256–268 (EQQR…EEAR) and 307–359 (AEAR…EEAV). Positions 313 to 362 (RGVADAEKAKANRAAAEAERQRKIAADEQRKAHEAAAEAERQREEAVKQQ) form a coiled coil. 7 WD repeats span residues 420–459 (GHTA…APRR), 465–504 (SSTA…APRR), 510–549 (GHTD…APRR), 555–594 (DHTA…APRR), 600–639 (GHTA…APRR), 645–684 (GHTA…APRR), and 690–720 (GHTD…CCGM).

It is found in the cell membrane. It carries out the reaction NAD(+) + H2O = ADP-D-ribose + nicotinamide + H(+). Its function is as follows. NAD(+) hydrolase (NADase) that catalyzes cleavage of NAD(+) into ADP-D-ribose (ADPR) and nicotinamide. The sequence is that of NAD(+) hydrolase ApTIR from Actinoplanes sp. (strain ATCC 31044 / CBS 674.73 / SE50/110).